Here is a 515-residue protein sequence, read N- to C-terminus: ATP synthase subunit alpha (515 aa).

ATP is bound at residue 169–176 (GDRQTGKT).

Belongs to the ATPase alpha/beta chains family. As to quaternary structure, F-type ATPases have 2 components, CF(1) - the catalytic core - and CF(0) - the membrane proton channel. CF(1) has five subunits: alpha(3), beta(3), gamma(1), delta(1), epsilon(1). CF(0) has three main subunits: a(1), b(2) and c(9-12). The alpha and beta chains form an alternating ring which encloses part of the gamma chain. CF(1) is attached to CF(0) by a central stalk formed by the gamma and epsilon chains, while a peripheral stalk is formed by the delta and b chains.

The protein resides in the cell inner membrane. The enzyme catalyses ATP + H2O + 4 H(+)(in) = ADP + phosphate + 5 H(+)(out). Its function is as follows. Produces ATP from ADP in the presence of a proton gradient across the membrane. The alpha chain is a regulatory subunit. The sequence is that of ATP synthase subunit alpha from Neisseria meningitidis serogroup C / serotype 2a (strain ATCC 700532 / DSM 15464 / FAM18).